We begin with the raw amino-acid sequence, 1807 residues long: Vitellogenin-2 (1807 aa).

The first 16 residues, 1–16, serve as a signal peptide directing secretion; it reads MWFPVTLLFLAGVAVA. The Vitellogenin domain occupies 24-819; the sequence is WETGNEYQYS…LIPKYVYVGV (796 aa). Cys-180 and Cys-224 are joined by a disulfide. The disordered stretch occupies residues 334–402; it reads SDSDNRRVRH…SSSSSSEEEN (69 aa). The segment covering 346–397 has biased composition (low complexity); the sequence is VSQNSEQENSSESSKSSSQSSSSSSSASSSSSSSSSSSSSSSSSSSSSSSSS. N-linked (GlcNAc...) asparagine glycans are attached at residues Asn-354, Asn-579, Asn-635, Asn-1181, Asn-1304, Asn-1373, and Asn-1506. The VWFD domain occupies 1448-1636; sequence QSCTLDKDKV…TYAMTQENCQ (189 aa). 2 disulfide bridges follow: Cys-1450–Cys-1599 and Cys-1472–Cys-1635. 2 disordered regions span residues 1635–1655 and 1684–1723; these read CQGPAPENKRRAEQSTCHEFP and NRNKEHGRGNKSHQNNKKQYQANSQESGSSESRNDKKKHN. N-linked (GlcNAc...) asparagine glycosylation occurs at Asn-1693. Positions 1700 to 1714 are enriched in polar residues; it reads KKQYQANSQESGSSE.

Its subcellular location is the secreted. Its function is as follows. Precursor of the egg-yolk proteins that are sources of nutrients during embryonic development. The sequence is that of Vitellogenin-2 from Solenopsis invicta (Red imported fire ant).